A 514-amino-acid chain; its full sequence is ATP synthase subunit alpha (514 aa).

170 to 177 (GDRQIGKT) provides a ligand contact to ATP.

Belongs to the ATPase alpha/beta chains family. F-type ATPases have 2 components, CF(1) - the catalytic core - and CF(0) - the membrane proton channel. CF(1) has five subunits: alpha(3), beta(3), gamma(1), delta(1), epsilon(1). CF(0) has three main subunits: a(1), b(2) and c(9-12). The alpha and beta chains form an alternating ring which encloses part of the gamma chain. CF(1) is attached to CF(0) by a central stalk formed by the gamma and epsilon chains, while a peripheral stalk is formed by the delta and b chains.

The protein resides in the cell inner membrane. It carries out the reaction ATP + H2O + 4 H(+)(in) = ADP + phosphate + 5 H(+)(out). Functionally, produces ATP from ADP in the presence of a proton gradient across the membrane. The alpha chain is a regulatory subunit. The chain is ATP synthase subunit alpha from Ectopseudomonas mendocina (strain ymp) (Pseudomonas mendocina).